Reading from the N-terminus, the 264-residue chain is NAD-capped RNA hydrolase NudC (264 aa).

Cys99 and Cys102 together coordinate Zn(2+). Glu112 serves as a coordination point for substrate. Residues Cys117 and Cys120 each coordinate Zn(2+). Position 125 (Tyr125) interacts with substrate. The 128-residue stretch at 126–253 (PVICPSIIVA…TIARKLIHAT (128 aa)) folds into the Nudix hydrolase domain. A divalent metal cation contacts are provided by Ala162, Glu178, and Glu182. The Nudix box signature appears at 163–184 (GFVEVGETFEQAVQREVFEETG). Residue 196-203 (QPWAFPNS) participates in substrate binding. Glu223 is an a divalent metal cation binding site. Ala246 contributes to the substrate binding site.

Belongs to the Nudix hydrolase family. NudC subfamily. As to quaternary structure, homodimer. It depends on Mg(2+) as a cofactor. Mn(2+) is required as a cofactor. The cofactor is Zn(2+).

The enzyme catalyses a 5'-end NAD(+)-phospho-ribonucleoside in mRNA + H2O = a 5'-end phospho-adenosine-phospho-ribonucleoside in mRNA + beta-nicotinamide D-ribonucleotide + 2 H(+). It carries out the reaction NAD(+) + H2O = beta-nicotinamide D-ribonucleotide + AMP + 2 H(+). It catalyses the reaction NADH + H2O = reduced beta-nicotinamide D-ribonucleotide + AMP + 2 H(+). Its function is as follows. mRNA decapping enzyme that specifically removes the nicotinamide adenine dinucleotide (NAD) cap from a subset of mRNAs by hydrolyzing the diphosphate linkage to produce nicotinamide mononucleotide (NMN) and 5' monophosphate mRNA. The NAD-cap is present at the 5'-end of some mRNAs and stabilizes RNA against 5'-processing. Has preference for mRNAs with a 5'-end purine. Catalyzes the hydrolysis of a broad range of dinucleotide pyrophosphates. This is NAD-capped RNA hydrolase NudC from Haemophilus influenzae (strain PittGG).